The primary structure comprises 334 residues: Serine/Arginine-related protein 53 (334 aa).

Basic and acidic residues predominate over residues 1-13 (MGRRSSDTEEESR). 3 disordered regions span residues 1–173 (MGRR…IKAG), 201–222 (LKAK…QATL), and 241–290 (VQQT…SIPT). The span at 14 to 24 (SKRKKKHRRRS) shows a compositional bias: basic residues. Residues 44 to 62 (PRSESRSWSRDRQPRSHSY) are compositionally biased toward basic and acidic residues. Over residues 78 to 118 (SRRKRSRSRSRGRGKSYRVQRSRSKSRTRRSRSRPRPRSHS) the composition is skewed to basic residues. Composition is skewed to basic and acidic residues over residues 132–166 (RSRD…KRGD), 201–218 (LKAK…KEED), and 247–262 (SSKD…EVKH). A coiled-coil region spans residues 180 to 234 (AEQAKARLQLVLEAAAKADEALKAKERNEEEAKRRKEEDQATLGEQVKRVKEIEA).

In terms of assembly, interacts (via Arg/Ser-rich domain) with LUC7L3, RBM39 and RSF1. Post-translationally, phosphorylated.

It localises to the nucleus speckle. It is found in the nucleus. Its subcellular location is the cytoplasm. Plays a role in pre-mRNA splicing. Involved in both constitutive and alternative pre-mRNA splicing. May have a role in the recognition of the 3' splice site during the second step of splicing. This Rattus norvegicus (Rat) protein is Serine/Arginine-related protein 53 (Rsrc1).